Consider the following 439-residue polypeptide: MLPQEIIRHKRDGHRLSAGEIAAFIGGVTSGAVTDGQAAAFAMAVFFNGMNRDEAVALTLAMRDSGDVLDWSDLPGPVTDKHSTGGVGDNVSLMLAPIVAACGAYVPMISGRGLGHTGGTLDKMDAIPGYISQPDIALFRQAVLETGCAIIGQTADLAPADRRLYAIRDVTGTVESVPLITASILSKKLAAGLGSLVLDVKVGNGAFMERSRDATALANSLVEVASGAGLKVSALITGMNEPLASAAGNAVEVHNAVDFLTGRLRDRRLEDVTLALAAEMLQSTGLVSSNQDGLRRATETLTSGRAAATFARMVAVLGGPADFIEKPEKYLAVAPTEFAVRATTDGFVTGIATRDIGLAVVGLGGGRTRPDDKIDPSVGITRLLPIGAEVHAGDALALVHARSPADAEAAAATVVSAYAIGASKPAADKTVMRRILPRG.

The protein belongs to the thymidine/pyrimidine-nucleoside phosphorylase family. As to quaternary structure, homodimer.

The enzyme catalyses thymidine + phosphate = 2-deoxy-alpha-D-ribose 1-phosphate + thymine. It participates in pyrimidine metabolism; dTMP biosynthesis via salvage pathway; dTMP from thymine: step 1/2. Functionally, the enzymes which catalyze the reversible phosphorolysis of pyrimidine nucleosides are involved in the degradation of these compounds and in their utilization as carbon and energy sources, or in the rescue of pyrimidine bases for nucleotide synthesis. This is Thymidine phosphorylase from Mesorhizobium japonicum (strain LMG 29417 / CECT 9101 / MAFF 303099) (Mesorhizobium loti (strain MAFF 303099)).